We begin with the raw amino-acid sequence, 517 residues long: L-amino-acid oxidase (517 aa).

The first 19 residues, Met-1–Ala-19, serve as a signal peptide directing secretion. A disulfide bridge connects residues Cys-29 and Cys-192. FAD contacts are provided by residues Met-62–Ala-63, Glu-82–Ala-83, Arg-90, and Gly-106–Arg-109. Arg-109 lines the substrate pocket. N-linked (GlcNAc...) asparagine glycosylation occurs at Asn-191. Val-280 is an FAD binding site. A disulfide bridge links Cys-350 with Cys-431. A glycan (N-linked (GlcNAc...) asparagine) is linked at Asn-380. Tyr-391 contacts substrate. FAD-binding positions include Glu-476 and Gly-483–Thr-488. Substrate is bound at residue Gly-483–Trp-484.

The protein belongs to the flavin monoamine oxidase family. FIG1 subfamily. Monomer. This is in contrast with most of its orthologs, that are non-covalently linked homodimers. FAD serves as cofactor. In terms of processing, N-glycosylated. In terms of tissue distribution, expressed by the venom gland.

Its subcellular location is the secreted. The catalysed reaction is an L-alpha-amino acid + O2 + H2O = a 2-oxocarboxylate + H2O2 + NH4(+). It carries out the reaction L-leucine + O2 + H2O = 4-methyl-2-oxopentanoate + H2O2 + NH4(+). It catalyses the reaction L-phenylalanine + O2 + H2O = 3-phenylpyruvate + H2O2 + NH4(+). The enzyme catalyses L-tryptophan + O2 + H2O = indole-3-pyruvate + H2O2 + NH4(+). The catalysed reaction is L-methionine + O2 + H2O = 4-methylsulfanyl-2-oxobutanoate + H2O2 + NH4(+). It carries out the reaction L-isoleucine + O2 + H2O = (S)-3-methyl-2-oxopentanoate + H2O2 + NH4(+). It catalyses the reaction L-arginine + O2 + H2O = 5-guanidino-2-oxopentanoate + H2O2 + NH4(+). The enzyme catalyses L-aspartate + O2 + H2O = oxaloacetate + H2O2 + NH4(+). The catalysed reaction is L-histidine + O2 + H2O = 3-(imidazol-5-yl)pyruvate + H2O2 + NH4(+). It carries out the reaction L-asparagine + O2 + H2O = 2-oxosuccinamate + H2O2 + NH4(+). It catalyses the reaction L-tyrosine + O2 + H2O = 3-(4-hydroxyphenyl)pyruvate + H2O2 + NH4(+). The enzyme catalyses L-glutamine + O2 + H2O = 2-oxoglutaramate + H2O2 + NH4(+). The catalysed reaction is L-alanine + O2 + H2O = pyruvate + H2O2 + NH4(+). It carries out the reaction L-lysine + O2 + H2O = 6-amino-2-oxohexanoate + H2O2 + NH4(+). It catalyses the reaction L-glutamate + O2 + H2O = H2O2 + 2-oxoglutarate + NH4(+). Catalyzes an oxidative deamination of predominantly hydrophobic and aromatic L-amino acids, thus producing hydrogen peroxide that may contribute to the diverse toxic effects of this enzyme. Is highly active against L-Tyr, L-Asp, L-Phe, L-Glu, L-Trp, L-His, L-Gln, L-Ile, L-Met, L-Leu and moderately active against L-Lys, L-Arg, L-Ala and L-Asn. Exhibits diverse biological activities, such as edema, inflammatory cell infiltration, cytotoxicity and apoptosis, as well as induction of platelet aggregation. Effects of snake L-amino oxidases on platelets are controversial, since they either induce aggregation or inhibit agonist-induced aggregation. These different effects are probably due to different experimental conditions. This protein may also induce hemorrhage, hemolysis, and have antibacterial and antiparasitic activities. This Bungarus fasciatus (Banded krait) protein is L-amino-acid oxidase.